The sequence spans 1500 residues: MEKVWESGRRMSRSIGRGMGMEAWGVDEAFMPQNSGGGGGSRGRRRSGRGGTADDDEEALRWAAIERLPTYSRMRTAILSSAEEEAAAAAAGAGKQQYKEVDVRRLGVGERQEFIERVFRVAEEDNQRFLQKLRNRIDRVGIELPTVEVRFEELMVQARCHVGSRALPTLLNTARNIAEAALGLVGVRPGRQATLTILRGVSGAVRPSRMTLLLGPPSSGKTTLLLALAGKLDPSLRRGGEVTYNGFELEEFVAQKTAAYISQTDVHVGEMTVKETLDFSARCQGVGTKYDLLTELARREKEAGIRPEPEVDLFMKATSMEGVESSLQTDYTLRILGLDICADTIVGDQMQRGISGGQKKRVTTGEMIVGPTKVLFMDEISTGLDSSTTFQIVKCLQQIVHLGEATILMSLLQPAPETFELFDDIILLSEGQIVYQGPREYVLEFFESCGFRCPERKGTADFLQEVTSKKDQEQYWADKHRPYRYISVSEFAQRFKRFHVGLQLENHLSVPFDKTRSHQAALVFSKQSVSTTELLKASFAKEWLLIKRNSFVYIFKTIQLIIVALVASTVFLRTQMHTRNLDDGFVYIGALLFSLIVNMFNGFAELSLTITRLPVFFKHRDLLFYPAWIFTLPNVILRIPFSIIESIVWVIVTYYTIGFAPEADRFFKQLLLVFLIQQMAGGLFRATAGLCRSMIIAQTGGALALLIFFVLGGFLLPKAFIPKWWIWGYWVSPLMYGYNALAVNEFYSPRWMNKFVLDNNGVPKRLGIALMEGANIFTDKNWFWIGAAGLLGFTMFFNVLFTLSLVYLNPLGKPQAVISEETAKEAEGNGDARHTVRNGSTKSNGGNHKEMREMRLSARLSNSSSNGVSRLMSIGSNEAGPRRGMVLPFTPLSMSFDDVNYYVDMPAEMKQQGVVDDRLQLLRDVTGSFRPAVLTALMGVSGAGKTTLMDVLAGRKTGGYIEGDMRISGYPKNQETFARISGYCEQNDIHSPQVTVRESLIYSAFLRLPEKIGDQEITDDIKIQFVDEVMELVELDNLKDALVGLPGITGLSTEQRKRLTIAVELVANPSIIFMDEPTSGLDARAAAIVMRTVRNTVDTGRTVVCTIHQPSIDIFEAFDELLLLKRGGQVIYSGQLGRNSQKMIEYFEAIPGVPKIKDKYNPATWMLEVSSVAAEVRLNMDFAEYYKTSDLYKQNKVLVNQLSQPEPGTSDLHFPTKYSQSTIGQFRACLWKQWLTYWRSPDYNLVRFSFTLFTALLLGTIFWKIGTKMGNANSLRMVIGAMYTAVMFIGINNCATVQPIVSIERTVFYRERAAGMYSAMPYAIAQVVMEIPYVFVQTAYYTLIVYAMMSFQWTAAKFFWFFFVSYFSFLYFTYYGMMTVAISPNHEVAAIFAAAFYSLFNLFSGFFIPRPRIPKWWIWYYWLCPLAWTVYGLIVTQYGDLEQIISVPGQSNQTISYYVTHHFGYHRKFMPVVAPVLVLFAVFFAFMYAICIKKLNFQHR.

Positions 26-56 (VDEAFMPQNSGGGGGSRGRRRSGRGGTADDD) are disordered. The region spanning 182-455 (LGLVGVRPGR…FESCGFRCPE (274 aa)) is the ABC transporter 1 domain. 215 to 222 (GPPSSGKT) lines the ATP pocket. An ABC transmembrane type-2 1 domain is found at 533–746 (ELLKASFAKE…GYNALAVNEF (214 aa)). 7 helical membrane passes run 551–571 (FVYI…STVF), 584–604 (GFVY…NGFA), 639–659 (IPFS…TIGF), 670–690 (LLLV…TAGL), 695–715 (IIAQ…GGFL), 724–744 (WWIW…LAVN), and 783–803 (FWIG…LFTL). Over residues 822-834 (TAKEAEGNGDARH) the composition is skewed to basic and acidic residues. Residues 822–850 (TAKEAEGNGDARHTVRNGSTKSNGGNHKE) form a disordered region. A compositionally biased stretch (polar residues) spans 837-846 (RNGSTKSNGG). In terms of domain architecture, ABC transporter 2 spans 894 to 1151 (MSFDDVNYYV…KMIEYFEAIP (258 aa)). 939–946 (GVSGAGKT) is an ATP binding site. The ABC transmembrane type-2 2 domain occupies 1224-1438 (GQFRACLWKQ…TVYGLIVTQY (215 aa)). Helical transmembrane passes span 1245-1265 (LVRF…FWKI), 1277-1297 (MVIG…CATV), 1331-1351 (IPYV…MMSF), 1358-1378 (FFWF…YGMM), 1388-1408 (VAAI…GFFI), 1416-1436 (WWIW…LIVT), and 1472-1492 (VVAP…AICI).

It belongs to the ABC transporter superfamily. ABCG family. PDR (TC 3.A.1.205) subfamily.

It is found in the membrane. May be a general defense protein. The sequence is that of ABC transporter G family member 42 from Oryza sativa subsp. japonica (Rice).